The following is a 243-amino-acid chain: Pyridoxine 5'-phosphate synthase (243 aa).

Residue Asn9 coordinates 3-amino-2-oxopropyl phosphate. 11-12 (DH) is a 1-deoxy-D-xylulose 5-phosphate binding site. 3-amino-2-oxopropyl phosphate is bound at residue Arg20. The Proton acceptor role is filled by His45. 1-deoxy-D-xylulose 5-phosphate contacts are provided by Arg47 and His52. Glu72 functions as the Proton acceptor in the catalytic mechanism. Residue Thr102 coordinates 1-deoxy-D-xylulose 5-phosphate. The active-site Proton donor is His193. Residues Gly194 and 215–216 (GH) each bind 3-amino-2-oxopropyl phosphate.

This sequence belongs to the PNP synthase family. As to quaternary structure, homooctamer; tetramer of dimers.

The protein resides in the cytoplasm. It carries out the reaction 3-amino-2-oxopropyl phosphate + 1-deoxy-D-xylulose 5-phosphate = pyridoxine 5'-phosphate + phosphate + 2 H2O + H(+). Its pathway is cofactor biosynthesis; pyridoxine 5'-phosphate biosynthesis; pyridoxine 5'-phosphate from D-erythrose 4-phosphate: step 5/5. In terms of biological role, catalyzes the complicated ring closure reaction between the two acyclic compounds 1-deoxy-D-xylulose-5-phosphate (DXP) and 3-amino-2-oxopropyl phosphate (1-amino-acetone-3-phosphate or AAP) to form pyridoxine 5'-phosphate (PNP) and inorganic phosphate. The protein is Pyridoxine 5'-phosphate synthase of Photobacterium profundum (strain SS9).